Reading from the N-terminus, the 603-residue chain is UvrABC system protein C (603 aa).

The GIY-YIG domain occupies 15 to 92 (DKPGCYLMKN…IQKHQPYFNI (78 aa)). The 36-residue stretch at 197–232 (ATVKRQLTKKMQRAAENMEFERAAEIRDQLHYIEVT) folds into the UVR domain.

The protein belongs to the UvrC family. In terms of assembly, interacts with UvrB in an incision complex.

The protein localises to the cytoplasm. Its function is as follows. The UvrABC repair system catalyzes the recognition and processing of DNA lesions. UvrC both incises the 5' and 3' sides of the lesion. The N-terminal half is responsible for the 3' incision and the C-terminal half is responsible for the 5' incision. This Limosilactobacillus reuteri (strain DSM 20016) (Lactobacillus reuteri) protein is UvrABC system protein C.